The chain runs to 277 residues: Undecaprenyl-diphosphatase (277 aa).

6 helical membrane passes run 47-67, 85-105, 108-128, 187-207, 218-238, and 249-269; these read FNII…RGKI, ANLL…ADLI, WLFN…VMLW, FSFF…GYVY, VFAV…RALL, and FAWY…FHLI.

Belongs to the UppP family.

It localises to the cell inner membrane. It catalyses the reaction di-trans,octa-cis-undecaprenyl diphosphate + H2O = di-trans,octa-cis-undecaprenyl phosphate + phosphate + H(+). In terms of biological role, catalyzes the dephosphorylation of undecaprenyl diphosphate (UPP). Confers resistance to bacitracin. The protein is Undecaprenyl-diphosphatase of Pseudomonas aeruginosa (strain ATCC 15692 / DSM 22644 / CIP 104116 / JCM 14847 / LMG 12228 / 1C / PRS 101 / PAO1).